A 720-amino-acid chain; its full sequence is Glycine--tRNA ligase beta subunit (720 aa).

It belongs to the class-II aminoacyl-tRNA synthetase family. In terms of assembly, tetramer of two alpha and two beta subunits.

The protein localises to the cytoplasm. It carries out the reaction tRNA(Gly) + glycine + ATP = glycyl-tRNA(Gly) + AMP + diphosphate. The sequence is that of Glycine--tRNA ligase beta subunit from Acidovorax sp. (strain JS42).